The chain runs to 413 residues: Histidine--tRNA ligase (413 aa).

Belongs to the class-II aminoacyl-tRNA synthetase family. In terms of assembly, homodimer.

Its subcellular location is the cytoplasm. It carries out the reaction tRNA(His) + L-histidine + ATP = L-histidyl-tRNA(His) + AMP + diphosphate + H(+). This is Histidine--tRNA ligase from Ehrlichia chaffeensis (strain ATCC CRL-10679 / Arkansas).